A 415-amino-acid chain; its full sequence is 1-deoxy-D-xylulose 5-phosphate reductoisomerase (415 aa).

Residues threonine 10, glycine 11, serine 12, isoleucine 13, glycine 36, arginine 37, asparagine 38, and asparagine 128 each contribute to the NADPH site. Lysine 129 contacts 1-deoxy-D-xylulose 5-phosphate. Glutamate 130 contributes to the NADPH binding site. Aspartate 154 serves as a coordination point for Mn(2+). Serine 155, glutamate 156, serine 192, and histidine 215 together coordinate 1-deoxy-D-xylulose 5-phosphate. Glutamate 156 is a Mn(2+) binding site. Glycine 221 contributes to the NADPH binding site. Positions 228, 233, 234, and 237 each coordinate 1-deoxy-D-xylulose 5-phosphate. Glutamate 237 serves as a coordination point for Mn(2+).

The protein belongs to the DXR family. It depends on Mg(2+) as a cofactor. Mn(2+) is required as a cofactor.

It carries out the reaction 2-C-methyl-D-erythritol 4-phosphate + NADP(+) = 1-deoxy-D-xylulose 5-phosphate + NADPH + H(+). It functions in the pathway isoprenoid biosynthesis; isopentenyl diphosphate biosynthesis via DXP pathway; isopentenyl diphosphate from 1-deoxy-D-xylulose 5-phosphate: step 1/6. Catalyzes the NADPH-dependent rearrangement and reduction of 1-deoxy-D-xylulose-5-phosphate (DXP) to 2-C-methyl-D-erythritol 4-phosphate (MEP). The polypeptide is 1-deoxy-D-xylulose 5-phosphate reductoisomerase (Synechococcus sp. (strain CC9605)).